The chain runs to 379 residues: tRNA-specific 2-thiouridylase MnmA (379 aa).

ATP-binding positions include 9–16 and M35; that span reads GLSGGVDS. The interaction with target base in tRNA stretch occupies residues 95-97; it reads NPD. The active-site Nucleophile is C100. Cysteines 100 and 198 form a disulfide. G124 lines the ATP pocket. An interaction with tRNA region spans residues 148–150; the sequence is KDQ. C198 functions as the Cysteine persulfide intermediate in the catalytic mechanism. The interaction with tRNA stretch occupies residues 325 to 326; that stretch reads RY.

Belongs to the MnmA/TRMU family.

The protein resides in the cytoplasm. It carries out the reaction S-sulfanyl-L-cysteinyl-[protein] + uridine(34) in tRNA + AH2 + ATP = 2-thiouridine(34) in tRNA + L-cysteinyl-[protein] + A + AMP + diphosphate + H(+). Catalyzes the 2-thiolation of uridine at the wobble position (U34) of tRNA, leading to the formation of s(2)U34. This chain is tRNA-specific 2-thiouridylase MnmA, found in Acidovorax sp. (strain JS42).